A 911-amino-acid chain; its full sequence is Leucine--tRNA ligase (911 aa).

The 'HIGH' region signature appears at 42–52 (PYPSGKLHMGH). The 'KMSKS' region signature appears at 659–663 (TMSKS). Residue lysine 662 coordinates ATP.

Belongs to the class-I aminoacyl-tRNA synthetase family.

It is found in the cytoplasm. The catalysed reaction is tRNA(Leu) + L-leucine + ATP = L-leucyl-tRNA(Leu) + AMP + diphosphate. The chain is Leucine--tRNA ligase from Delftia acidovorans (strain DSM 14801 / SPH-1).